The sequence spans 210 residues: ATP-dependent Clp protease proteolytic subunit (210 aa).

Serine 107 serves as the catalytic Nucleophile. Residue histidine 132 is part of the active site.

This sequence belongs to the peptidase S14 family. In terms of assembly, fourteen ClpP subunits assemble into 2 heptameric rings which stack back to back to give a disk-like structure with a central cavity, resembling the structure of eukaryotic proteasomes.

The protein resides in the cytoplasm. The catalysed reaction is Hydrolysis of proteins to small peptides in the presence of ATP and magnesium. alpha-casein is the usual test substrate. In the absence of ATP, only oligopeptides shorter than five residues are hydrolyzed (such as succinyl-Leu-Tyr-|-NHMec, and Leu-Tyr-Leu-|-Tyr-Trp, in which cleavage of the -Tyr-|-Leu- and -Tyr-|-Trp bonds also occurs).. Functionally, cleaves peptides in various proteins in a process that requires ATP hydrolysis. Has a chymotrypsin-like activity. Plays a major role in the degradation of misfolded proteins. In Azorhizobium caulinodans (strain ATCC 43989 / DSM 5975 / JCM 20966 / LMG 6465 / NBRC 14845 / NCIMB 13405 / ORS 571), this protein is ATP-dependent Clp protease proteolytic subunit.